A 446-amino-acid chain; its full sequence is Glutamate-1-semialdehyde 2,1-aminomutase (446 aa).

The residue at position 278 (K278) is an N6-(pyridoxal phosphate)lysine.

Belongs to the class-III pyridoxal-phosphate-dependent aminotransferase family. HemL subfamily. In terms of assembly, homodimer. The cofactor is pyridoxal 5'-phosphate.

It localises to the cytoplasm. The catalysed reaction is (S)-4-amino-5-oxopentanoate = 5-aminolevulinate. It functions in the pathway porphyrin-containing compound metabolism; protoporphyrin-IX biosynthesis; 5-aminolevulinate from L-glutamyl-tRNA(Glu): step 2/2. The sequence is that of Glutamate-1-semialdehyde 2,1-aminomutase from Deinococcus geothermalis (strain DSM 11300 / CIP 105573 / AG-3a).